Reading from the N-terminus, the 124-residue chain is Small ribosomal subunit protein uS13 (124 aa).

Positions 94–124 (RGLPVRGQRTKTNARTRKGPKRTIAGKKKAR) are disordered.

The protein belongs to the universal ribosomal protein uS13 family. Part of the 30S ribosomal subunit. Forms a loose heterodimer with protein S19. Forms two bridges to the 50S subunit in the 70S ribosome.

Its function is as follows. Located at the top of the head of the 30S subunit, it contacts several helices of the 16S rRNA. In the 70S ribosome it contacts the 23S rRNA (bridge B1a) and protein L5 of the 50S subunit (bridge B1b), connecting the 2 subunits; these bridges are implicated in subunit movement. Contacts the tRNAs in the A and P-sites. This is Small ribosomal subunit protein uS13 from Mycolicibacterium vanbaalenii (strain DSM 7251 / JCM 13017 / BCRC 16820 / KCTC 9966 / NRRL B-24157 / PYR-1) (Mycobacterium vanbaalenii).